The primary structure comprises 686 residues: Methionine--tRNA ligase (686 aa).

A 'HIGH' region motif is present at residues 15-25; it reads PYANGSIHLGH. Zn(2+) is bound by residues Cys-146, Cys-149, Cys-159, and Cys-162. Residues 332 to 336 carry the 'KMSKS' region motif; the sequence is KMSKS. Lys-335 serves as a coordination point for ATP. Positions 550 to 571 are disordered; it reads AAAEAAAKEKAEAEKEQASQTE. One can recognise a tRNA-binding domain in the interval 585-686; sequence AFSAVDMRIA…EGAQPGMRVM (102 aa).

This sequence belongs to the class-I aminoacyl-tRNA synthetase family. MetG type 1 subfamily. In terms of assembly, homodimer. Requires Zn(2+) as cofactor.

It is found in the cytoplasm. It catalyses the reaction tRNA(Met) + L-methionine + ATP = L-methionyl-tRNA(Met) + AMP + diphosphate. Is required not only for elongation of protein synthesis but also for the initiation of all mRNA translation through initiator tRNA(fMet) aminoacylation. The sequence is that of Methionine--tRNA ligase from Vibrio atlanticus (strain LGP32) (Vibrio splendidus (strain Mel32)).